The primary structure comprises 144 residues: Small polypeptide DEVIL 15 (144 aa).

An N-linked (GlcNAc...) asparagine glycan is attached at N8. A disordered region spans residues 22 to 63; the sequence is SSSSKPFFTRSFSTKTSSSPSSKSHFTRSFSTKPSSSSSSSD. The helical transmembrane segment at 104–120 threads the bilayer; sequence ILSKKGASVTGKCFKVA. The interval 111-142 is required for DVL/RTFL small polypeptide activity; the sequence is SVTGKCFKVAKEHKSRFYIIKRCVLMLVCWHK.

Belongs to the DVL/RTFL small polypeptides family.

It is found in the cell membrane. Functionally, small polypeptide acting as a regulatory molecule which coordinates cellular responses required for differentiation, growth and development, probably by restricting polar cell proliferation in lateral organs and coordinating socket cell recruitment and differentiation at trichome sites. In Arabidopsis thaliana (Mouse-ear cress), this protein is Small polypeptide DEVIL 15.